The sequence spans 252 residues: 2-succinyl-6-hydroxy-2,4-cyclohexadiene-1-carboxylate synthase (252 aa).

The protein belongs to the AB hydrolase superfamily. MenH family. As to quaternary structure, monomer.

It catalyses the reaction 5-enolpyruvoyl-6-hydroxy-2-succinyl-cyclohex-3-ene-1-carboxylate = (1R,6R)-6-hydroxy-2-succinyl-cyclohexa-2,4-diene-1-carboxylate + pyruvate. It participates in quinol/quinone metabolism; 1,4-dihydroxy-2-naphthoate biosynthesis; 1,4-dihydroxy-2-naphthoate from chorismate: step 3/7. It functions in the pathway quinol/quinone metabolism; menaquinone biosynthesis. Functionally, catalyzes a proton abstraction reaction that results in 2,5-elimination of pyruvate from 2-succinyl-5-enolpyruvyl-6-hydroxy-3-cyclohexene-1-carboxylate (SEPHCHC) and the formation of 2-succinyl-6-hydroxy-2,4-cyclohexadiene-1-carboxylate (SHCHC). This chain is 2-succinyl-6-hydroxy-2,4-cyclohexadiene-1-carboxylate synthase, found in Shigella sonnei (strain Ss046).